A 464-amino-acid polypeptide reads, in one-letter code: Cell division protein FtsA (464 aa).

The interval 392 to 464 is disordered; that stretch reads EVIETDKDTE…FKKLMKSLFE (73 aa). A compositionally biased stretch (basic and acidic residues) spans 416-455; it reads KKENDEVAPEAPREESYEDRENHLEDEQQTEGKAKEESKF.

It belongs to the FtsA/MreB family. Self-interacts. Interacts with FtsZ.

The protein resides in the cell membrane. Its function is as follows. Cell division protein that is involved in the assembly of the Z ring. May serve as a membrane anchor for the Z ring. This chain is Cell division protein FtsA, found in Staphylococcus epidermidis (strain ATCC 12228 / FDA PCI 1200).